Reading from the N-terminus, the 216-residue chain is Putative holocytochrome-c1 synthase (216 aa).

The interval methionine 1–proline 46 is disordered.

Belongs to the cytochrome c-type heme lyase family.

The protein resides in the mitochondrion inner membrane. The catalysed reaction is holo-[cytochrome c] = apo-[cytochrome c] + heme b. Functionally, lyase that catalyzes the covalent linking of the heme group to the cytochrome C1 apoprotein to produce the mature functional cytochrome. This chain is Putative holocytochrome-c1 synthase, found in Schizosaccharomyces pombe (strain 972 / ATCC 24843) (Fission yeast).